Reading from the N-terminus, the 305-residue chain is Acetyl-coenzyme A carboxylase carboxyl transferase subunit beta (305 aa).

Residues 27-296 (LWVKCSACRE…PAAKADLAAR (270 aa)) form the CoA carboxyltransferase N-terminal domain. 4 residues coordinate Zn(2+): cysteine 31, cysteine 34, cysteine 50, and cysteine 53. Residues 31 to 53 (CSACRELIYKKQLNDNLKVCPKC) form a C4-type zinc finger.

This sequence belongs to the AccD/PCCB family. In terms of assembly, acetyl-CoA carboxylase is a heterohexamer composed of biotin carboxyl carrier protein (AccB), biotin carboxylase (AccC) and two subunits each of ACCase subunit alpha (AccA) and ACCase subunit beta (AccD). Zn(2+) serves as cofactor.

The protein localises to the cytoplasm. It carries out the reaction N(6)-carboxybiotinyl-L-lysyl-[protein] + acetyl-CoA = N(6)-biotinyl-L-lysyl-[protein] + malonyl-CoA. It functions in the pathway lipid metabolism; malonyl-CoA biosynthesis; malonyl-CoA from acetyl-CoA: step 1/1. Its function is as follows. Component of the acetyl coenzyme A carboxylase (ACC) complex. Biotin carboxylase (BC) catalyzes the carboxylation of biotin on its carrier protein (BCCP) and then the CO(2) group is transferred by the transcarboxylase to acetyl-CoA to form malonyl-CoA. In Chloroflexus aggregans (strain MD-66 / DSM 9485), this protein is Acetyl-coenzyme A carboxylase carboxyl transferase subunit beta.